The following is an 831-amino-acid chain: AMP deaminase (831 aa).

Disordered regions lie at residues 26–45, 66–110, and 130–149; these read NPGANRDEEVAAAPSSQDTP, NGTQ…KLLN, and NAVVSSVGGPETDPGNMETT. A phosphoserine mark is found at Ser-79 and Ser-84. Zn(2+)-binding residues include His-319 and His-321. Substrate-binding positions include His-321 and 390–395; that span reads KFNLKY. His-587 is a binding site for Zn(2+). A substrate-binding site is contributed by Glu-590. Residue His-609 is the Proton acceptor of the active site. Residue Asp-664 coordinates Zn(2+). 665 to 668 contacts substrate; that stretch reads DPLQ. Phosphoserine occurs at positions 758, 776, 780, and 782.

It belongs to the metallo-dependent hydrolases superfamily. Adenosine and AMP deaminases family. Homotetramer. It depends on Zn(2+) as a cofactor.

It localises to the cytoplasm. It catalyses the reaction AMP + H2O + H(+) = IMP + NH4(+). It functions in the pathway purine metabolism; IMP biosynthesis via salvage pathway; IMP from AMP: step 1/1. Its function is as follows. AMP deaminase plays a critical role in energy metabolism. The protein is AMP deaminase (ada1) of Schizosaccharomyces pombe (strain 972 / ATCC 24843) (Fission yeast).